The chain runs to 678 residues: UvrABC system protein B (678 aa).

The Helicase ATP-binding domain occupies 31 to 417; sequence ENLNDGLAHQ…KSGTEIIDQV (387 aa). 44–51 is an ATP binding site; the sequence is GVTGSGKT. Positions 97–120 match the Beta-hairpin motif; sequence YYDYYQPEAYVPSSDTFIEKDASI. A Helicase C-terminal domain is found at 436 to 602; the sequence is QVDDLLSEAR…GLNKKVGELL (167 aa). Positions 603 to 625 are disordered; sequence DIGQGGSNKSRNKPRSQKAAEPA. In terms of domain architecture, UVR spans 638-673; the sequence is QQQIKKLEQQMYKFAQDLEFEKAAAIRDQLHKLREQ.

It belongs to the UvrB family. Forms a heterotetramer with UvrA during the search for lesions. Interacts with UvrC in an incision complex.

It localises to the cytoplasm. The UvrABC repair system catalyzes the recognition and processing of DNA lesions. A damage recognition complex composed of 2 UvrA and 2 UvrB subunits scans DNA for abnormalities. Upon binding of the UvrA(2)B(2) complex to a putative damaged site, the DNA wraps around one UvrB monomer. DNA wrap is dependent on ATP binding by UvrB and probably causes local melting of the DNA helix, facilitating insertion of UvrB beta-hairpin between the DNA strands. Then UvrB probes one DNA strand for the presence of a lesion. If a lesion is found the UvrA subunits dissociate and the UvrB-DNA preincision complex is formed. This complex is subsequently bound by UvrC and the second UvrB is released. If no lesion is found, the DNA wraps around the other UvrB subunit that will check the other stand for damage. The sequence is that of UvrABC system protein B from Mannheimia succiniciproducens (strain KCTC 0769BP / MBEL55E).